Here is a 584-residue protein sequence, read N- to C-terminus: Sulfite reductase [NADPH] hemoprotein beta-component (584 aa).

The [4Fe-4S] cluster site is built by cysteine 447, cysteine 453, cysteine 492, and cysteine 496. Siroheme is bound at residue cysteine 496.

The protein belongs to the nitrite and sulfite reductase 4Fe-4S domain family. In terms of assembly, alpha(8)-beta(8). The alpha component is a flavoprotein, the beta component is a hemoprotein. Siroheme is required as a cofactor. [4Fe-4S] cluster serves as cofactor.

The enzyme catalyses hydrogen sulfide + 3 NADP(+) + 3 H2O = sulfite + 3 NADPH + 4 H(+). The protein operates within sulfur metabolism; hydrogen sulfide biosynthesis; hydrogen sulfide from sulfite (NADPH route): step 1/1. In terms of biological role, component of the sulfite reductase complex that catalyzes the 6-electron reduction of sulfite to sulfide. This is one of several activities required for the biosynthesis of L-cysteine from sulfate. The protein is Sulfite reductase [NADPH] hemoprotein beta-component of Colwellia psychrerythraea (strain 34H / ATCC BAA-681) (Vibrio psychroerythus).